The sequence spans 147 residues: uncharacterized protein (147 aa).

Positions 44–147 (LVGYIDKEIH…LKSIKERLSI (104 aa)) constitute an HTH LytTR-type domain.

It localises to the cytoplasm. This is an uncharacterized protein from Staphylococcus aureus (strain Mu50 / ATCC 700699).